A 314-amino-acid chain; its full sequence is uncharacterized protein (314 aa).

The next 2 membrane-spanning stretches (helical) occupy residues 23–43 (LALG…MALF) and 98–118 (MASG…GPLT). Positions 165–184 (GLGSGAGGGDVGGGGAGGTT) are enriched in gly residues. Residues 165–314 (GLGSGAGGGD…APDEKTDAGE (150 aa)) form a disordered region. Residues 190–202 (GPPPVPTSSPPTT) are compositionally biased toward pro residues. Low complexity-rich tracts occupy residues 203–212 (PAGAPTKSAT) and 219–232 (ASPA…AGMP). The helical transmembrane segment at 221–241 (PASAHMGAAGMPMVPPGAMGA) threads the bilayer. The span at 294 to 314 (LLPEHKDFGRIAPDEKTDAGE) shows a compositional bias: basic and acidic residues.

It is found in the cell membrane. This is an uncharacterized protein from Mycobacterium tuberculosis (strain CDC 1551 / Oshkosh).